A 362-amino-acid polypeptide reads, in one-letter code: Olfactory receptor 5AU1 (362 aa).

Topologically, residues 1 to 79 (MTEFHLQSQM…TDPQLQRLLF (79 aa)) are extracellular. N-linked (GlcNAc...) asparagine glycosylation is present at N56. A helical transmembrane segment spans residues 80–100 (VVFLGMYTATLLGNLVMFLLI). At 101 to 116 (HVSATLHTPMYSLLKS) the chain is on the cytoplasmic side. Residues 117 to 139 (LSFLDFCYSSTVVPQTLVNFLAK) form a helical membrane-spanning segment. Residues 140-150 (RKVISYFGCMT) are Extracellular-facing. C148 and C230 are disulfide-bonded. A helical membrane pass occupies residues 151–171 (QMFFYAGFATSECYLIAAMAY). Topologically, residues 172–194 (DRYAAICNPLLYSTIMSPEVCAS) are cytoplasmic. The helical transmembrane segment at 195 to 215 (LIVGSYSAGFLNSLIHTGCIF) threads the bilayer. Residues 216-247 (SLKFCGAHVVTHFFCDGPPILSLSCVDTSLCE) are Extracellular-facing. The helical transmembrane segment at 248 to 268 (ILLFIFAGFNLLSCTLTILIS) threads the bilayer. Residues 269–290 (YFLILNTILKMSSAQGRFKAFS) lie on the Cytoplasmic side of the membrane. A helical membrane pass occupies residues 291 to 311 (TCASHLTAICLFFGTTLFMYL). Residues 312–322 (RPRSSYSLTQD) are Extracellular-facing. The helical transmembrane segment at 323–343 (RTVAVIYTVVIPVLNPLMYSL) threads the bilayer. At 344-362 (RNKDVKKALIKVWGRKTME) the chain is on the cytoplasmic side.

The protein belongs to the G-protein coupled receptor 1 family.

It is found in the cell membrane. Odorant receptor. The sequence is that of Olfactory receptor 5AU1 (OR5AU1) from Homo sapiens (Human).